A 302-amino-acid chain; its full sequence is Methionyl-tRNA formyltransferase (302 aa).

Residue 109–112 (SILP) participates in (6S)-5,6,7,8-tetrahydrofolate binding.

This sequence belongs to the Fmt family.

It catalyses the reaction L-methionyl-tRNA(fMet) + (6R)-10-formyltetrahydrofolate = N-formyl-L-methionyl-tRNA(fMet) + (6S)-5,6,7,8-tetrahydrofolate + H(+). Its function is as follows. Attaches a formyl group to the free amino group of methionyl-tRNA(fMet). The formyl group appears to play a dual role in the initiator identity of N-formylmethionyl-tRNA by promoting its recognition by IF2 and preventing the misappropriation of this tRNA by the elongation apparatus. This is Methionyl-tRNA formyltransferase from Campylobacter hominis (strain ATCC BAA-381 / DSM 21671 / CCUG 45161 / LMG 19568 / NCTC 13146 / CH001A).